Consider the following 86-residue polypeptide: Small ribosomal subunit protein uS15 (86 aa).

Residues 1–22 are disordered; the sequence is MSVDTQKVIEDNKRSAQDTGSP. A compositionally biased stretch (basic and acidic residues) spans 7–16; the sequence is KVIEDNKRSA.

The protein belongs to the universal ribosomal protein uS15 family. Part of the 30S ribosomal subunit. Forms a bridge to the 50S subunit in the 70S ribosome, contacting the 23S rRNA.

One of the primary rRNA binding proteins, it binds directly to 16S rRNA where it helps nucleate assembly of the platform of the 30S subunit by binding and bridging several RNA helices of the 16S rRNA. Functionally, forms an intersubunit bridge (bridge B4) with the 23S rRNA of the 50S subunit in the ribosome. The sequence is that of Small ribosomal subunit protein uS15 from Xanthomonas axonopodis pv. citri (strain 306).